Reading from the N-terminus, the 692-residue chain is Zinc finger protein 180 (692 aa).

In terms of domain architecture, KRAB spans 72–145 (VNFKIVTVDF…GVKIERFTRD (74 aa)). Residues K138, K159, K168, K191, K198, K226, K304, K313, and K330 each participate in a glycyl lysine isopeptide (Lys-Gly) (interchain with G-Cter in SUMO2) cross-link. 12 C2H2-type zinc fingers span residues 353-375 (FECNQCGKSFSWSSHLVAHQRTH), 381-403 (YECSECGKSFSRSSHLVSHQRTH), 409-431 (YRCNQCGKSFSQSYVLVVHQRTH), 437-459 (YECNQCGKSFRQSYKLIAHQRTH), 465-487 (YECNQCGKSFIQSYKLIAHQRIH), 493-515 (YECNQCGKSFSQSYKLVAHQRTH), 521-543 (FECNQCGKSFSWSSQLVAHQRTH), 549-571 (YECSECGKSFNRSSHLVMHQRIH), 577-599 (YECNQCGKSFSQSYVLVVHQRTH), 605-627 (YECSQCGKSFRQSSCLTQHQRTH), 633-655 (FECNQCGKTFSLSARLIVHQRTH), and 661-683 (FTCIQCGKAFINSYKLIRHQATH).

Belongs to the krueppel C2H2-type zinc-finger protein family.

The protein resides in the nucleus. Functionally, may be involved in transcriptional regulation. This is Zinc finger protein 180 (ZNF180) from Homo sapiens (Human).